The chain runs to 258 residues: UPF0246 protein YaaA (258 aa).

The protein belongs to the UPF0246 family.

The chain is UPF0246 protein YaaA from Escherichia coli (strain 55989 / EAEC).